A 209-amino-acid chain; its full sequence is Guanylate kinase (209 aa).

One can recognise a Guanylate kinase-like domain in the interval 5–182 (GLLIVISGPS…AVTKINSIIV (178 aa)). Position 12-19 (12-19 (GPSGAGKG)) interacts with ATP.

It belongs to the guanylate kinase family.

The protein resides in the cytoplasm. It carries out the reaction GMP + ATP = GDP + ADP. In terms of biological role, essential for recycling GMP and indirectly, cGMP. The chain is Guanylate kinase from Clostridium acetobutylicum (strain ATCC 824 / DSM 792 / JCM 1419 / IAM 19013 / LMG 5710 / NBRC 13948 / NRRL B-527 / VKM B-1787 / 2291 / W).